Here is a 479-residue protein sequence, read N- to C-terminus: MMNLGNRVKSVIKLTSTTGLTGKDFQATKVATFSTAQVQQAQENVRSYGGLKDKDRIFTNLYGEHDVYLKGAIARGDWYKTKNIIDKGKDWILKEMMASGLRGRGGAGFPSGLKWSFMPKTTSKDRPQYLVINADEGEPGTCKDREIMRHDPHKLIEGCLLAGFAMRACAAYIYIRGEFHYEAKVLEQAIDEAYKAGLIGENACGTGYKFDVYVHRGAGAYICGEETALIESIEGKQGKPRLKPPFPAMAGLYGCPTTVTNVETVAVAPTILRRGGAWFASFGRPKNAGTKLFCISGHVNNPCTVEEEMSIPLRELIDKHCGGVIGGWDNLKGVIPGGSSVPVLPKNICDNVLMDFDDLRQHRSGLGTAAVIVMNKETDMIAAIARLSKFYKHESCGQCTPCREGVGWLYDITDRLVTGNAKPDEIDSLEEISRQIEGHTICALGDAAAWPVQGLIRHFRPEIEDRIKQFQLNKKQSPF.

103–112 (GRGGAGFPSG) contacts NADH. 216 to 264 (RGAGAYICGEETALIESIEGKQGKPRLKPPFPAMAGLYGCPTTVTNVET) contacts FMN. The [4Fe-4S] cluster site is built by Cys396, Cys399, Cys402, and Cys442.

The protein belongs to the complex I 51 kDa subunit family. As to quaternary structure, complex I is composed of about 45 different subunits. This is a component of the flavoprotein-sulfur (FP) fragment of the enzyme. The cofactor is FMN. [4Fe-4S] cluster serves as cofactor.

It localises to the mitochondrion inner membrane. It carries out the reaction a ubiquinone + NADH + 5 H(+)(in) = a ubiquinol + NAD(+) + 4 H(+)(out). Core subunit of the mitochondrial membrane respiratory chain NADH dehydrogenase (Complex I) that is believed to belong to the minimal assembly required for catalysis. Complex I functions in the transfer of electrons from NADH to the respiratory chain. The immediate electron acceptor for the enzyme is believed to be ubiquinone. The protein is NADH dehydrogenase [ubiquinone] flavoprotein 1, mitochondrial (ndufv1) of Dictyostelium discoideum (Social amoeba).